We begin with the raw amino-acid sequence, 279 residues long: Putative pyruvate, phosphate dikinase regulatory protein (279 aa).

153 to 160 (GVSRTSKT) contributes to the ADP binding site.

The protein belongs to the pyruvate, phosphate/water dikinase regulatory protein family. PDRP subfamily.

It catalyses the reaction N(tele)-phospho-L-histidyl/L-threonyl-[pyruvate, phosphate dikinase] + ADP = N(tele)-phospho-L-histidyl/O-phospho-L-threonyl-[pyruvate, phosphate dikinase] + AMP + H(+). The enzyme catalyses N(tele)-phospho-L-histidyl/O-phospho-L-threonyl-[pyruvate, phosphate dikinase] + phosphate + H(+) = N(tele)-phospho-L-histidyl/L-threonyl-[pyruvate, phosphate dikinase] + diphosphate. Bifunctional serine/threonine kinase and phosphorylase involved in the regulation of the pyruvate, phosphate dikinase (PPDK) by catalyzing its phosphorylation/dephosphorylation. The polypeptide is Putative pyruvate, phosphate dikinase regulatory protein (Bradyrhizobium sp. (strain ORS 278)).